A 78-amino-acid polypeptide reads, in one-letter code: U5-ctenitoxin-Pk1a (78 aa).

7 cysteine pairs are disulfide-bonded: Cys-6-Cys-23, Cys-13-Cys-29, Cys-20-Cys-52, Cys-22-Cys-40, Cys-31-Cys-38, Cys-58-Cys-73, and Cys-69-Cys-77.

Expressed by the venom gland.

The protein resides in the secreted. Its function is as follows. Lethal neurotoxin. Causes spastic paralysis and death in mice in 4-6 minutes after intracerebroventricular injection at dose levels of 1.5 ug per mouse. The polypeptide is U5-ctenitoxin-Pk1a (Phoneutria keyserlingi (Brazilian wandering spider)).